The following is a 288-amino-acid chain: MNDLISAAYSERLRRVCDHIERHLDEPLSIEALSRMAHSSPFHFHRQFTTWSGLPLYRYIQWLRLRRASWRLAFNPQDKVIDIALDAGFQNPESFTRAFKTAFGQSPRRFRQSPDWLAWHQRVPKLALQEQHVMDVKIVEFPPTRVAMLTHLGHPDKVNASAAKFIAWRRETGQSPIASSQTFGIAWHDPQTTPPAQFRFDICGSVRQPIAENDVGVVNSEIPGGRCAVVRHQGSLDSLPESVWYLFREWLPASGETPRDFPVFFQYLNFVHEVAEHELLTDIYLPLR.

The HTH araC/xylS-type domain occupies 14–113; the sequence is RRVCDHIERH…GQSPRRFRQS (100 aa). 2 consecutive DNA-binding regions (H-T-H motif) follow at residues 31–52 and 80–103; these read EALS…TTWS and VIDI…KTAF. Residues 111–288 are putative effector binding domain; binds the peptide antibiotic albicidin; it reads RQSPDWLAWH…LLTDIYLPLR (178 aa).

In terms of assembly, homodimer.

In terms of biological role, probable transcription factor. The chain is Probable HTH-type transcriptional regulator STM3175 from Salmonella typhimurium (strain LT2 / SGSC1412 / ATCC 700720).